We begin with the raw amino-acid sequence, 377 residues long: Nitric oxide reductase FlRd-NAD(+) reductase (377 aa).

The protein belongs to the FAD-dependent oxidoreductase family. Requires FAD as cofactor.

Its subcellular location is the cytoplasm. The enzyme catalyses 2 reduced [nitric oxide reductase rubredoxin domain] + NAD(+) + H(+) = 2 oxidized [nitric oxide reductase rubredoxin domain] + NADH. It functions in the pathway nitrogen metabolism; nitric oxide reduction. Functionally, one of at least two accessory proteins for anaerobic nitric oxide (NO) reductase. Reduces the rubredoxin moiety of NO reductase. This chain is Nitric oxide reductase FlRd-NAD(+) reductase, found in Salmonella gallinarum (strain 287/91 / NCTC 13346).